The chain runs to 166 residues: MTSSVPSLRIGNGYDVHRLVPDRPLILGGQLLEHPAGLGLDGHSDADVLVHAIMDALLGALSLGDIGKYFPPSDPQWKGADSLVLLEQVVALVKARGWGVVNVDAVLIAERPKLKPHIEAMRSAIALRIGVAPDQVGVKATTNEQLGPEGREEGISCQAVALLQAL.

A divalent metal cation-binding residues include Asp15 and His17. Residues 15–17 (DVH) and 43–44 (HS) each bind 4-CDP-2-C-methyl-D-erythritol 2-phosphate. Position 51 (His51) interacts with a divalent metal cation. 4-CDP-2-C-methyl-D-erythritol 2-phosphate-binding positions include 65-67 (DIG), 141-144 (TTNE), and Arg151.

The protein belongs to the IspF family. Homotrimer. It depends on a divalent metal cation as a cofactor.

The enzyme catalyses 4-CDP-2-C-methyl-D-erythritol 2-phosphate = 2-C-methyl-D-erythritol 2,4-cyclic diphosphate + CMP. It functions in the pathway isoprenoid biosynthesis; isopentenyl diphosphate biosynthesis via DXP pathway; isopentenyl diphosphate from 1-deoxy-D-xylulose 5-phosphate: step 4/6. In terms of biological role, involved in the biosynthesis of isopentenyl diphosphate (IPP) and dimethylallyl diphosphate (DMAPP), two major building blocks of isoprenoid compounds. Catalyzes the conversion of 4-diphosphocytidyl-2-C-methyl-D-erythritol 2-phosphate (CDP-ME2P) to 2-C-methyl-D-erythritol 2,4-cyclodiphosphate (ME-CPP) with a corresponding release of cytidine 5-monophosphate (CMP). This is 2-C-methyl-D-erythritol 2,4-cyclodiphosphate synthase from Synechococcus sp. (strain CC9311).